The primary structure comprises 578 residues: Monooxygenase cfoE (578 aa).

The chain crosses the membrane as a helical span at residues 549-569 (IVLSGVPLVVFGSLHLVLWIF).

It belongs to the FMO family. Requires FAD as cofactor.

The protein localises to the membrane. It functions in the pathway secondary metabolite biosynthesis; flavonoid biosynthesis. Functionally, monooxygenase; part of the gene cluster that mediates the biosynthesis of chlorflavonin, a fungal flavonoid with acetolactate synthase inhibitory activity. Within the pathway, cfoE is responsible for the chlorination of the flavonoid skeleton at position C3'. The pathway begins with the PKS-NRPS hybrid synthetase cfoA that uses benzoic acid or p-hydroxybenzoic acid as a starter unit with four rounds of chain elongation using malonyl-CoA to form the chalcone skeleton. Then, a new type of chalcone isomerase, cfoK, catalyzes the conversion of the chalcone into a flavanone by a histidine-mediated oxa-Michael addition mechanism. The desaturation of flavanone to flavone is catalyzed by a new type of flavone synthase, the flavin mononucleotide (FMN)-dependent oxidoreductase cfoJ. Monooxygenases cfoF, cfoG, and P450 cfoH are responsible for the hydroxylation of the flavonoid skeleton at sites C3, C8, and C2', respectively. Like cfoF, the dehydratase cfoI plays also a role in the hydroxylation of position C3. Methyltransferases cfoB, cfoC, and cfoD then catalyze the methylation of C7-OH, C8-OH, and C3-OH, respectively. Finally, the monooxygenase cfoE is responsible for the chlorination of flavonoid at position C3'. The chain is Monooxygenase cfoE from Aspergillus candidus.